The primary structure comprises 416 residues: Phosphoglycerate kinase (416 aa).

The (2R)-3-phosphoglycerate site is built by V23, D24, F25, N26, Q38, R39, S62, H63, G65, R66, L121, R122, H168, and R169. ADP is bound at residue G212. G212 contributes to the CDP binding site. Positions 213 and 214 each coordinate AMP. ATP is bound at residue A213. A213 contributes to the Mg(2+) binding site. 2 residues coordinate Mg(2+): A216 and D217. D217 is a binding site for CDP. K218 contacts AMP. Position 218 (K218) interacts with ATP. Residue G236 coordinates ADP. G236 is a binding site for CDP. AMP contacts are provided by G237 and G311. Positions 237 and 311 each coordinate ATP. Residues G336 and F341 each contribute to the CDP site. Residue F341 participates in ADP binding. E342 is an AMP binding site. Positions 342, 373, and 374 each coordinate ATP. D373 lines the Mg(2+) pocket.

It belongs to the phosphoglycerate kinase family. Monomer. Mg(2+) serves as cofactor.

The protein resides in the cytoplasm. Its subcellular location is the mitochondrion. It carries out the reaction (2R)-3-phosphoglycerate + ATP = (2R)-3-phospho-glyceroyl phosphate + ADP. Its pathway is carbohydrate degradation; glycolysis; pyruvate from D-glyceraldehyde 3-phosphate: step 2/5. Its function is as follows. Catalyzes one of the two ATP producing reactions in the glycolytic pathway via the reversible conversion of 1,3-diphosphoglycerate to 3-phosphoglycerate. Both L- and D- forms of purine and pyrimidine nucleotides can be used as substrates, but the activity is much lower on pyrimidines. Negatively regulates the biosynthesis of acetyl-CoA from pyruvate in the mitochondrion. This chain is Phosphoglycerate kinase (PGK), found in Kluyveromyces lactis (strain ATCC 8585 / CBS 2359 / DSM 70799 / NBRC 1267 / NRRL Y-1140 / WM37) (Yeast).